We begin with the raw amino-acid sequence, 263 residues long: uncharacterized protein (263 aa).

31-38 provides a ligand contact to ATP; the sequence is GPTGSGKT.

The protein belongs to the CbbQ/NirQ/NorQ/GpvN family.

This is an uncharacterized protein from Staphylococcus epidermidis (strain ATCC 12228 / FDA PCI 1200).